Here is a 250-residue protein sequence, read N- to C-terminus: MIILITNDDGFESEGIKLLKEVARNFASEIWIVAPDTDRSGAARSLDHPVKQSIRINQHNEREFSVSGTPADCVIIALNKIMDKKPDLVLSGVNIGSNVGDDVCYSGTIGAVMEGAARSIPSIALSQAYHGGINWYNTKIFAPKVIAKLVKVGWPKNIAMSINFSATEKVKGVEFAEQGEYNIDGDLTFTENPDGSLSLNWSREHLGSGSVGKIKEGFITITPIKLDFTDYDTLNAMKNSYAEEFSSIVN.

A divalent metal cation contacts are provided by Asp8, Asp9, Ser40, and Asn94.

Belongs to the SurE nucleotidase family. A divalent metal cation is required as a cofactor.

It localises to the cytoplasm. The catalysed reaction is a ribonucleoside 5'-phosphate + H2O = a ribonucleoside + phosphate. Functionally, nucleotidase that shows phosphatase activity on nucleoside 5'-monophosphates. In Wolbachia sp. subsp. Brugia malayi (strain TRS), this protein is 5'-nucleotidase SurE.